We begin with the raw amino-acid sequence, 1645 residues long: Cortactin-binding protein 2 (1645 aa).

Disordered regions lie at residues 1–28 (MATD…EAAK), 269–293 (LKRG…SVSI), 366–435 (IVSS…AALH), 451–478 (GNAN…SRDS), and 492–612 (ALSR…PPKP). Residues 119–276 (RKMQERMSTQ…EQLKRGNDSK (158 aa)) adopt a coiled-coil conformation. 2 stretches are compositionally biased toward polar residues: residues 407 to 417 (QTPTIAPQSHA) and 451 to 477 (GNAN…TSRD). R495 carries the asymmetric dimethylarginine modification. Polar residues predominate over residues 580–590 (TMASPPSTLPQ). 6 ANK repeats span residues 706–736 (GRPT…DINY), 740–769 (DGHS…QVNA), 773–802 (NGFT…NINH), 806–835 (EGQT…DRSV), 839–868 (DGWT…PARR), and 909–939 (EGWT…EPER). Residues 868–898 (RNSLHEEEPESGVFDLDQGEESPEGTSKPVI) form a disordered region. Positions 1442–1479 (CSRKKGESGAWRKVSTSPRKKSGRFSPPSWSKPGPSEE) are disordered. The residue at position 1521 (S1521) is a Phosphoserine. The tract at residues 1551–1645 (DDLRSFDSPG…EINNNSKEEI (95 aa)) is disordered. 2 stretches are compositionally biased toward polar residues: residues 1558–1569 (SPGNSPAFSATV) and 1582–1597 (PFSS…SQSK). The segment covering 1620–1634 (SQNTKRSSSSSNTRQ) has biased composition (low complexity). The segment covering 1635–1645 (IEINNNSKEEI) has biased composition (polar residues).

Interacts with CTTN/cortactin SH3 domain. Interacts with STRN, STRN4/zinedin and MOB4/phocein; this interactions mediate the association with the STRIPAK core complex and may regulate dendritic spine distribution of the STRIPAK complex in hippocampal neurons. Activation of glutamate receptors weakens the interaction with STRN and STRN4.

The protein localises to the cytoplasm. It localises to the cell cortex. The protein resides in the cell projection. It is found in the dendritic spine. Functionally, regulates the dendritic spine distribution of CTTN/cortactin in hippocampal neurons, and thus controls dendritic spinogenesis and dendritic spine maintenance. Associates with the striatin-interacting phosphatase and kinase (STRIPAK) core complex to regulate dendritic spine distribution of the STRIPAK complex in hippocampal neurons. The sequence is that of Cortactin-binding protein 2 (CTTNBP2) from Mustela putorius furo (European domestic ferret).